The following is a 132-amino-acid chain: uncharacterized protein (132 aa).

The first 35 residues, 1 to 35, serve as a signal peptide directing secretion; the sequence is MSFEYRHYKREAKICTCRGGWAHVLLCIGVSQGAC. Residues 91-132 are disordered; sequence AHPGSHSDQPPGVPSRRKSRLERWSPSVSRSTSPPTEAPFCL. Positions 115-125 are enriched in low complexity; the sequence is SPSVSRSTSPP.

The protein resides in the secreted. This is an uncharacterized protein from Homo sapiens (Human).